The chain runs to 284 residues: Probable 3-mercaptopyruvate sulfurtransferase (284 aa).

2 consecutive Rhodanese domains span residues 17–138 and 168–281; these read SEPD…ALTN and GQPG…RPVA. Residue Arg-182 participates in substrate binding. Cys-241 acts as the Cysteine persulfide intermediate in catalysis. The substrate specificity stretch occupies residues 241 to 247; sequence CGSGVTA.

It is found in the cytoplasm. It carries out the reaction 2-oxo-3-sulfanylpropanoate + [thioredoxin]-dithiol = [thioredoxin]-disulfide + hydrogen sulfide + pyruvate + H(+). Functionally, catalyzes the transfer of sulfur from 3-mercaptopyruvate to a thiol-containing acceptor to form an intramolecular disulfide releasing hydrogen sulfide and pyruvate. The polypeptide is Probable 3-mercaptopyruvate sulfurtransferase (sseA) (Pseudomonas aeruginosa (strain ATCC 15692 / DSM 22644 / CIP 104116 / JCM 14847 / LMG 12228 / 1C / PRS 101 / PAO1)).